A 968-amino-acid chain; its full sequence is uncharacterized protein (968 aa).

Disordered regions lie at residues Ser-124 to Pro-177, Gln-348 to Ser-437, Thr-572 to Thr-595, Pro-608 to Lys-627, and Lys-837 to Lys-877. A compositionally biased stretch (polar residues) spans Thr-131–Ser-157. Low complexity-rich tracts occupy residues Gln-158–Pro-177, Asn-352–Asn-431, and Thr-572–Gln-593. The segment covering Asp-841–Ser-857 has biased composition (low complexity).

This is an uncharacterized protein from Dictyostelium discoideum (Social amoeba).